The sequence spans 567 residues: Probable diguanylate cyclase DgcQ (567 aa).

The next 2 membrane-spanning stretches (helical) occupy residues 20 to 40 and 357 to 377; these read FGPGHVVNTCFLIVMLFSTLL and IALTLLWGLFTAMLLISWGVI. The GGDEF domain maps to 425–560; sequence QPFSVIQLDL…GRNRICASDA (136 aa). D433 is a Mg(2+) binding site. Substrate contacts are provided by N441, H446, and D450. E476 provides a ligand contact to Mg(2+). The active-site Proton acceptor is the E476.

As to quaternary structure, homodimer. Mg(2+) serves as cofactor.

The protein resides in the cell inner membrane. It catalyses the reaction 2 GTP = 3',3'-c-di-GMP + 2 diphosphate. It functions in the pathway glycan metabolism; bacterial cellulose biosynthesis. It participates in purine metabolism; 3',5'-cyclic di-GMP biosynthesis. In terms of biological role, catalyzes the synthesis of cyclic-di-GMP (c-di-GMP) via the condensation of 2 GTP molecules. Cyclic-di-GMP is a second messenger which controls cell surface-associated traits in bacteria. Involved in the regulation of cellulose production. The chain is Probable diguanylate cyclase DgcQ from Salmonella typhi.